The primary structure comprises 197 residues: UPF0301 protein AnaeK_4073 (197 aa).

The protein belongs to the UPF0301 (AlgH) family.

In Anaeromyxobacter sp. (strain K), this protein is UPF0301 protein AnaeK_4073.